The primary structure comprises 158 residues: Deoxyuridine 5'-triphosphate nucleotidohydrolase (158 aa).

Substrate contacts are provided by residues 75-77 (RSG), asparagine 88, 92-94 (TVD), and lysine 102.

It belongs to the dUTPase family. The cofactor is Mg(2+).

The enzyme catalyses dUTP + H2O = dUMP + diphosphate + H(+). Its pathway is pyrimidine metabolism; dUMP biosynthesis; dUMP from dCTP (dUTP route): step 2/2. In terms of biological role, this enzyme is involved in nucleotide metabolism: it produces dUMP, the immediate precursor of thymidine nucleotides and it decreases the intracellular concentration of dUTP so that uracil cannot be incorporated into DNA. In Bifidobacterium longum subsp. infantis (strain ATCC 15697 / DSM 20088 / JCM 1222 / NCTC 11817 / S12), this protein is Deoxyuridine 5'-triphosphate nucleotidohydrolase.